We begin with the raw amino-acid sequence, 202 residues long: Peptidyl-tRNA hydrolase (202 aa).

Tyrosine 17 provides a ligand contact to tRNA. The active-site Proton acceptor is the histidine 22. Phenylalanine 76, asparagine 78, and asparagine 124 together coordinate tRNA.

The protein belongs to the PTH family. In terms of assembly, monomer.

It localises to the cytoplasm. It carries out the reaction an N-acyl-L-alpha-aminoacyl-tRNA + H2O = an N-acyl-L-amino acid + a tRNA + H(+). In terms of biological role, hydrolyzes ribosome-free peptidyl-tRNAs (with 1 or more amino acids incorporated), which drop off the ribosome during protein synthesis, or as a result of ribosome stalling. Catalyzes the release of premature peptidyl moieties from peptidyl-tRNA molecules trapped in stalled 50S ribosomal subunits, and thus maintains levels of free tRNAs and 50S ribosomes. This Nitratidesulfovibrio vulgaris (strain DSM 19637 / Miyazaki F) (Desulfovibrio vulgaris) protein is Peptidyl-tRNA hydrolase.